The primary structure comprises 105 residues: Thiosulfate sulfurtransferase GlpE (105 aa).

The region spanning Asp16–Glu104 is the Rhodanese domain. Cys64 acts as the Cysteine persulfide intermediate in catalysis.

The protein belongs to the GlpE family.

It localises to the cytoplasm. The enzyme catalyses thiosulfate + hydrogen cyanide = thiocyanate + sulfite + 2 H(+). The catalysed reaction is thiosulfate + [thioredoxin]-dithiol = [thioredoxin]-disulfide + hydrogen sulfide + sulfite + 2 H(+). In terms of biological role, transferase that catalyzes the transfer of sulfur from thiosulfate to thiophilic acceptors such as cyanide or dithiols. May function in a CysM-independent thiosulfate assimilation pathway by catalyzing the conversion of thiosulfate to sulfite, which can then be used for L-cysteine biosynthesis. In Pseudoalteromonas translucida (strain TAC 125), this protein is Thiosulfate sulfurtransferase GlpE.